The sequence spans 374 residues: Dual-specificity RNA methyltransferase RlmN (374 aa).

The Proton acceptor role is filled by glutamate 91. The region spanning 97–340 is the Radical SAM core domain; it reads EDDRGTLCIS…TTVRKTRGDD (244 aa). Cysteine 104 and cysteine 345 are disulfide-bonded. Residues cysteine 111, cysteine 115, and cysteine 118 each coordinate [4Fe-4S] cluster. Residues 165-166, serine 197, 219-221, and asparagine 302 contribute to the S-adenosyl-L-methionine site; these read GE and SLH. Catalysis depends on cysteine 345, which acts as the S-methylcysteine intermediate.

The protein belongs to the radical SAM superfamily. RlmN family. The cofactor is [4Fe-4S] cluster.

The protein localises to the cytoplasm. It carries out the reaction adenosine(2503) in 23S rRNA + 2 reduced [2Fe-2S]-[ferredoxin] + 2 S-adenosyl-L-methionine = 2-methyladenosine(2503) in 23S rRNA + 5'-deoxyadenosine + L-methionine + 2 oxidized [2Fe-2S]-[ferredoxin] + S-adenosyl-L-homocysteine. The catalysed reaction is adenosine(37) in tRNA + 2 reduced [2Fe-2S]-[ferredoxin] + 2 S-adenosyl-L-methionine = 2-methyladenosine(37) in tRNA + 5'-deoxyadenosine + L-methionine + 2 oxidized [2Fe-2S]-[ferredoxin] + S-adenosyl-L-homocysteine. In terms of biological role, specifically methylates position 2 of adenine 2503 in 23S rRNA and position 2 of adenine 37 in tRNAs. m2A2503 modification seems to play a crucial role in the proofreading step occurring at the peptidyl transferase center and thus would serve to optimize ribosomal fidelity. The protein is Dual-specificity RNA methyltransferase RlmN of Acidovorax sp. (strain JS42).